Reading from the N-terminus, the 131-residue chain is Heat shock protein 15 homolog (131 aa).

The S4 RNA-binding domain occupies 6-67 (VRLDKWLWAA…NEEKEIKIIA (62 aa)). Positions 98–131 (ARKNNSLSMPHPDRRPNKKERRDLLKFKHQDKFE) are disordered. Residues 108–131 (HPDRRPNKKERRDLLKFKHQDKFE) are compositionally biased toward basic and acidic residues.

Belongs to the HSP15 family.

Involved in the recycling of free 50S ribosomal subunits that still carry a nascent chain. Binds RNA more specifically than DNA. Binds with very high affinity to the free 50S ribosomal subunit. Does not bind it when it is part of the 70S ribosome. This chain is Heat shock protein 15 homolog (hslR), found in Haemophilus influenzae (strain ATCC 51907 / DSM 11121 / KW20 / Rd).